Consider the following 349-residue polypeptide: uncharacterized protein (349 aa).

Residues 16-36 (LVITIISTGLIFGMTLVLTGL) traverse the membrane as a helical segment. The interval 111-139 (FGAPEHGPGMPRVSEGRSPSKPDEVAASS) is disordered. Residues 124–134 (SEGRSPSKPDE) show a composition bias toward basic and acidic residues. Helical transmembrane passes span 231-251 (ISIVAVLLWIVAVLIVGSVVY), 284-304 (VIALLAAVVGVVLAQVLAPLF), and 307-327 (IVAVPVGAYLALPVAAIVIGL).

The protein belongs to the ABC-4 integral membrane protein family. In terms of assembly, the complex is composed of two ATP-binding proteins (MT0079), two transmembrane proteins (MT0078) and a solute-binding protein.

The protein localises to the cell membrane. Probably part of an ABC transporter complex. Probably responsible for the translocation of the substrate across the membrane. This is an uncharacterized protein from Mycobacterium tuberculosis (strain CDC 1551 / Oshkosh).